The sequence spans 82 residues: Small ribosomal subunit protein bS16 (82 aa).

It belongs to the bacterial ribosomal protein bS16 family.

In Klebsiella pneumoniae (strain 342), this protein is Small ribosomal subunit protein bS16.